The primary structure comprises 224 residues: Superoxide dismutase [Mn], mitochondrial (224 aa).

Residues 1-20 (MLLARAFARRSLRAGLWCRQ) constitute a mitochondrion transit peptide. Mn(2+) contacts are provided by histidine 46, histidine 94, aspartate 177, and histidine 181.

This sequence belongs to the iron/manganese superoxide dismutase family. Homotetramer. It depends on Mn(2+) as a cofactor.

Its subcellular location is the mitochondrion matrix. It catalyses the reaction 2 superoxide + 2 H(+) = H2O2 + O2. Destroys superoxide anion radicals which are normally produced within the cells and which are toxic to biological systems. This Charybdis feriata (Crucifix crab) protein is Superoxide dismutase [Mn], mitochondrial.